The following is a 1021-amino-acid chain: Probable calcium-transporting ATPase 6, plasma membrane-type (1021 aa).

Residues 1–155 (MEGGRSWSIE…RSFWMFVWDA (155 aa)) lie on the Cytoplasmic side of the membrane. The next 2 helical transmembrane spans lie at 156 to 176 (LHDL…VVGL) and 181 to 201 (WPMG…VVLV). At 202-241 (TATSDYQQARKFMELDREKQKIYIRVTRDKKTKEVLVHDL) the chain is on the cytoplasmic side. Transmembrane regions (helical) follow at residues 242–262 (VVGD…GLFI) and 338–358 (VATI…LVLL). Topologically, residues 359-384 (ARFLADKGMHVGLLNWSANDALTIVN) are cytoplasmic. The helical transmembrane segment at 385–405 (YFAIAVTIIVVAVPEGLPLAV) threads the bilayer. The active-site 4-aspartylphosphate intermediate is Asp-441. Mg(2+) contacts are provided by Asp-740 and Asp-744. A helical transmembrane segment spans residues 807–827 (IVALIVNFVSACIIGSAPLTA). Topologically, residues 828-829 (VQ) are cytoplasmic. 2 consecutive transmembrane segments (helical) span residues 830 to 850 (LLWV…TEPP) and 879 to 899 (GLYQ…LLSI). Residues 900–942 (EGPQSDKTINTLIFNSFVFCQVFNEINCREMEKINVLQGIFRN) are Cytoplasmic-facing. The next 2 membrane-spanning stretches (helical) occupy residues 943–963 (WIFV…VEFL) and 974–994 (GELW…SVIL). The Cytoplasmic segment spans residues 995-1021 (KCIPVEFNKTNTKPHGYELIPEGPEIL).

It belongs to the cation transport ATPase (P-type) (TC 3.A.3) family. Type IIB subfamily.

The protein resides in the membrane. It carries out the reaction Ca(2+)(in) + ATP + H2O = Ca(2+)(out) + ADP + phosphate + H(+). With respect to regulation, activated by calmodulin. Functionally, this magnesium-dependent enzyme catalyzes the hydrolysis of ATP coupled with the translocation of calcium from the cytosol out of the cell, into the endoplasmic reticulum, or into organelles. This is Probable calcium-transporting ATPase 6, plasma membrane-type from Oryza sativa subsp. japonica (Rice).